Reading from the N-terminus, the 562-residue chain is Serine palmitoyltransferase 2 (562 aa).

A helical membrane pass occupies residues 61–81; that stretch reads LITYLNYLILIILGHIHDFLG. Lysine 365 is modified (N6-(pyridoxal phosphate)lysine).

It belongs to the class-II pyridoxal-phosphate-dependent aminotransferase family. Requires pyridoxal 5'-phosphate as cofactor.

The protein localises to the membrane. The catalysed reaction is L-serine + hexadecanoyl-CoA + H(+) = 3-oxosphinganine + CO2 + CoA. It participates in lipid metabolism; sphingolipid metabolism. The polypeptide is Serine palmitoyltransferase 2 (LCB2) (Kluyveromyces lactis (strain ATCC 8585 / CBS 2359 / DSM 70799 / NBRC 1267 / NRRL Y-1140 / WM37) (Yeast)).